Here is a 159-residue protein sequence, read N- to C-terminus: Phosphopantetheine adenylyltransferase (159 aa).

Thr-10 contributes to the substrate binding site. ATP is bound by residues 10-11 and His-18; that span reads TF. The substrate site is built by Lys-42, Met-74, and Arg-88. ATP contacts are provided by residues 89–91, Glu-99, and 124–130; these read GLR and WSFISSS.

The protein belongs to the bacterial CoaD family. As to quaternary structure, homohexamer. It depends on Mg(2+) as a cofactor.

It localises to the cytoplasm. It carries out the reaction (R)-4'-phosphopantetheine + ATP + H(+) = 3'-dephospho-CoA + diphosphate. The protein operates within cofactor biosynthesis; coenzyme A biosynthesis; CoA from (R)-pantothenate: step 4/5. In terms of biological role, reversibly transfers an adenylyl group from ATP to 4'-phosphopantetheine, yielding dephospho-CoA (dPCoA) and pyrophosphate. The sequence is that of Phosphopantetheine adenylyltransferase from Salmonella arizonae (strain ATCC BAA-731 / CDC346-86 / RSK2980).